The primary structure comprises 1006 residues: DNA polymerase (1006 aa).

It belongs to the DNA polymerase type-B family. In terms of assembly, interacts with OPG148. Component of the Uracil-DNA glycosylase(UDG)-OPG148-polymerase complex; OPG148 and OPG116/UDG form a heterodimeric processivity factor that associates with OPG071 to form the processive polymerase holoenzyme.

The enzyme catalyses DNA(n) + a 2'-deoxyribonucleoside 5'-triphosphate = DNA(n+1) + diphosphate. Its function is as follows. Catalyzes DNA synthesis. Acquires processivity by associating with a heterodimeric processivity factor comprised of the viral OPG148 and OPG116 proteins, thereby forming the DNA polymerase holoenzyme. Displays 3'- to 5' exonuclease activity. Might participate in viral DNA recombination. Does not perform OPG116/D4synthesis across an abasic site. The sequence is that of DNA polymerase (OPG071) from Homo sapiens (Human).